The sequence spans 462 residues: tRNA modification GTPase MnmE (462 aa).

The (6S)-5-formyl-5,6,7,8-tetrahydrofolate site is built by Arg23, Glu86, and Lys125. The 164-residue stretch at Gly221 to Asn384 folds into the TrmE-type G domain. A K(+)-binding site is contributed by Asn231. GTP-binding positions include Asn231–Thr236, Ser250–Thr256, and Asp275–Gly278. A Mg(2+)-binding site is contributed by Ser235. 3 residues coordinate K(+): Ser250, Ile252, and Thr255. Residue Thr256 participates in Mg(2+) binding. Lys462 lines the (6S)-5-formyl-5,6,7,8-tetrahydrofolate pocket.

Belongs to the TRAFAC class TrmE-Era-EngA-EngB-Septin-like GTPase superfamily. TrmE GTPase family. In terms of assembly, homodimer. Heterotetramer of two MnmE and two MnmG subunits. It depends on K(+) as a cofactor.

The protein localises to the cytoplasm. Exhibits a very high intrinsic GTPase hydrolysis rate. Involved in the addition of a carboxymethylaminomethyl (cmnm) group at the wobble position (U34) of certain tRNAs, forming tRNA-cmnm(5)s(2)U34. The sequence is that of tRNA modification GTPase MnmE from Flavobacterium psychrophilum (strain ATCC 49511 / DSM 21280 / CIP 103535 / JIP02/86).